We begin with the raw amino-acid sequence, 89 residues long: Small ribosomal subunit protein uS15 (89 aa).

This sequence belongs to the universal ribosomal protein uS15 family. Part of the 30S ribosomal subunit. Forms a bridge to the 50S subunit in the 70S ribosome, contacting the 23S rRNA.

Its function is as follows. One of the primary rRNA binding proteins, it binds directly to 16S rRNA where it helps nucleate assembly of the platform of the 30S subunit by binding and bridging several RNA helices of the 16S rRNA. Forms an intersubunit bridge (bridge B4) with the 23S rRNA of the 50S subunit in the ribosome. This is Small ribosomal subunit protein uS15 from Chelativorans sp. (strain BNC1).